A 63-amino-acid polypeptide reads, in one-letter code: Large ribosomal subunit protein uL29 (63 aa).

Belongs to the universal ribosomal protein uL29 family.

This chain is Large ribosomal subunit protein uL29, found in Aliarcobacter butzleri (strain RM4018) (Arcobacter butzleri).